The sequence spans 391 residues: Period circadian protein (391 aa).

Disordered regions lie at residues 27 to 121, 163 to 188, 241 to 270, and 328 to 357; these read VTAP…PPVT, MLEYSGPGPGHGHGIKRGGSHSWEGE, GSSAGGNGSGTGNNNGNGNNNQPTTNQFTQ, and SPSGTSPNPNRPHKHAHVHSSSEKPSTSQA. Residues 93–114 show a composition bias toward gly residues; that stretch reads GTSGTGNSGDGGGGGGADGPGS. Residues 241–255 show a composition bias toward gly residues; that stretch reads GSSAGGNGSGTGNNN.

In terms of assembly, forms a heterodimer with timeless (TIM); the complex then translocates into the nucleus. In terms of processing, phosphorylated with a circadian rhythmicity, probably by the double-time protein (dbt). Phosphorylation could be implicated in the stability of per monomer and in the formation of heterodimer per-tim.

The protein resides in the nucleus. Its subcellular location is the cytoplasm. It localises to the perinuclear region. Its function is as follows. Essential for biological clock functions. Determines the period length of circadian and ultradian rhythms; an increase in PER dosage leads to shortened circadian rhythms and a decrease leads to lengthened circadian rhythms. Essential for the circadian rhythmicity of locomotor activity, eclosion behavior, and for the rhythmic component of the male courtship song that originates in the thoracic nervous system. The biological cycle depends on the rhythmic formation and nuclear localization of the TIM-PER complex. Light induces the degradation of TIM, which promotes elimination of PER. Nuclear activity of the heterodimer coordinatively regulates PER and TIM transcription through a negative feedback loop. Behaves as a negative element in circadian transcriptional loop. Does not appear to bind DNA, suggesting indirect transcriptional inhibition. The protein is Period circadian protein (per) of Drosophila insularis (Fruit fly).